The primary structure comprises 999 residues: MEQVQDEIWKLSTLDAWEMVNKNTEVVFDEIPEPETLSEMKRHPLYSNIFNADNNTTSFTEQIETSETSKTQDSEGNKVDKNLKENKSIRRKRSIDNDYELSNVKRNDITSGKNREFENEHHPASDTSSWRELPSIPTLEELTSKSVELPSNNIYGGYKSFEDYLSIHYRLLREDAVSPLRESVLRYKVNPNYITGSSLAVYDHVRIDGYTISSSVIAAKLSFSVRAKKKIKWATSRRLISGSLVLLSNDDFQTFRIGTVCARPLSGLNKHPHEIDVKFEDISISLDPREEYVMIEATSGYWEAYKHVLRSLQRLSASTFPMKDYLVHCKSNQETAKHIQNNPRIRINSILKNNSQKIVNALEPFGPGEYILDSSQLKAYQSMLTKRLSIIQGPPGTGKSFVTLKAIETLLENTHSHVLPILVACQTNHAVDQILIRLLHQGASVMRLGSRTKDPEIAAVTIFQKAKHTKHSFKAAYNEIRHKKQRLIKQITNIMHNFNLEFVTLSYLHSKGIITTSQLESLRNNTEWISSVAENGEKTEEELISIWLGDAKVELITPSEITDGFEEELQIDPEKLEEIQKEAEDSGALMEEELRGKFINLRCKYLFSKLTTLHEKEIDTLLTIPNIWDIPEYSRGIIYCRWLESAYAAAEKELNRLYRFYLKVDRERIGFSNKRAAILLRGANVIGMTTTGLNKYRDILERINPKICFIEEAADVLEGPIIPAVFPSLEQLVLIGDHKQLRPGCSTYALRQDPFNLSISMFERLVENDMEYTRLTMQRRMHPQIRRLVSSVYEDLSDYEITKYWPSIPGMGEIRRFFLTHSRIEDNDGFASKINLFEAQMLVQFAVYLINNGVEPQKITCLTFYAAQKDLIERLLSESLNREKHFIKVATVDGYQGEENDVVLLSLVRNNDRTEVGFLSSPHRVCVSLSRARRGLFIFGNAQLVAESNPLWWDAINTLMNDETIQGLGDHLPLFTKDGTIYVNDPVELLDVNMRLTRK.

The interval 61–90 is disordered; it reads EQIETSETSKTQDSEGNKVDKNLKENKSIR. Residues 70–88 show a composition bias toward basic and acidic residues; it reads KTQDSEGNKVDKNLKENKS. The residue at position 94 (serine 94) is a Phosphoserine. The segment covering 106 to 124 has biased composition (basic and acidic residues); it reads RNDITSGKNREFENEHHPA. A disordered region spans residues 106–131; sequence RNDITSGKNREFENEHHPASDTSSWR. 393–400 contacts ATP; that stretch reads GPPGTGKS.

In terms of assembly, cid12, hrr1 and rdp1 interact forming the RNA-directed RNA polymerase complex (RDRC). The RDRC complex interacts with the RITS complex via interaction between ago1 and hrr1. Clr4 has a role in mediating this interaction.

It localises to the cytoplasm. It is found in the nucleus. The enzyme catalyses ATP + H2O = ADP + phosphate + H(+). Has a role in the RNA interference (RNAi) pathway which is important for heterochromatin formation and accurate chromosome segregation. A member of the RNA-directed RNA polymerase complex (RDRC) which is involved in the generation of small interfering RNAs (siRNAs) and mediate their association with the RNA-induced transcriptional silencing (RITS) complex. RITS acts as a priming complex for dsRNA synthesis at the site of non-coding centromeric RNA. The sequence is that of Helicase required for RNAi-mediated heterochromatin assembly 1 (hrr1) from Schizosaccharomyces pombe (strain 972 / ATCC 24843) (Fission yeast).